The primary structure comprises 238 residues: Aspartate/glutamate leucyltransferase (238 aa).

This sequence belongs to the R-transferase family. Bpt subfamily.

The protein resides in the cytoplasm. The catalysed reaction is N-terminal L-glutamyl-[protein] + L-leucyl-tRNA(Leu) = N-terminal L-leucyl-L-glutamyl-[protein] + tRNA(Leu) + H(+). It carries out the reaction N-terminal L-aspartyl-[protein] + L-leucyl-tRNA(Leu) = N-terminal L-leucyl-L-aspartyl-[protein] + tRNA(Leu) + H(+). Functions in the N-end rule pathway of protein degradation where it conjugates Leu from its aminoacyl-tRNA to the N-termini of proteins containing an N-terminal aspartate or glutamate. This is Aspartate/glutamate leucyltransferase from Nitrosococcus oceani (strain ATCC 19707 / BCRC 17464 / JCM 30415 / NCIMB 11848 / C-107).